The following is a 190-amino-acid chain: Cancer-related nucleoside-triphosphatase (190 aa).

Ala2 is modified (N-acetylalanine). Residues 9-16 and 109-116 contribute to the ATP site; these read GPPGVGKT and VCVIDEIG. An N6-acetyllysine modification is found at Lys165.

The protein belongs to the THEP1 NTPase family. As to quaternary structure, monomer.

It carries out the reaction a ribonucleoside 5'-triphosphate + H2O = a ribonucleoside 5'-diphosphate + phosphate + H(+). It catalyses the reaction 5-methyl-UTP + H2O = 5-methyl-UDP + phosphate + H(+). The enzyme catalyses CTP + H2O = CDP + phosphate + H(+). The catalysed reaction is ATP + H2O = ADP + phosphate + H(+). It carries out the reaction GTP + H2O = GDP + phosphate + H(+). Functionally, has nucleotide phosphatase activity towards ATP, GTP, CTP, TTP and UTP. Hydrolyzes nucleoside diphosphates with lower efficiency. This Homo sapiens (Human) protein is Cancer-related nucleoside-triphosphatase.